A 79-amino-acid polypeptide reads, in one-letter code: Small ribosomal subunit protein uS17 (79 aa).

This sequence belongs to the universal ribosomal protein uS17 family. In terms of assembly, part of the 30S ribosomal subunit.

One of the primary rRNA binding proteins, it binds specifically to the 5'-end of 16S ribosomal RNA. In Rhizobium etli (strain ATCC 51251 / DSM 11541 / JCM 21823 / NBRC 15573 / CFN 42), this protein is Small ribosomal subunit protein uS17.